A 92-amino-acid chain; its full sequence is LYR motif-containing protein 4 homolog (92 aa).

Positions 48 to 68 form a coiled coil; sequence AEIDRQMAEGQQNLELIRRQV.

This sequence belongs to the complex I LYR family. As to quaternary structure, component of the mitochondrial core iron-sulfur cluster (ISC) assembly complex at least composed of the cysteine desulfurase Nfs1, the scaffold protein IscU, the accessory protein bcn92/Isd11/Lyrm4, and probably fh/frataxin. Interacts with Nfs1.

It is found in the mitochondrion. In terms of biological role, stabilizing factor of the core iron-sulfur cluster (ISC) assembly complex that regulates the stability and cysteine desulfurase activity of Nfs1 and participates in the [2Fe-2S] clusters assembly on the scaffolding protein IscU. The protein is LYR motif-containing protein 4 homolog of Drosophila melanogaster (Fruit fly).